We begin with the raw amino-acid sequence, 166 residues long: Eukaryotic translation initiation factor 5A (166 aa).

Lys52 carries the post-translational modification Hypusine. A disordered region spans residues Asp99 to Pro125.

Belongs to the eIF-5A family. Post-translationally, lys-52 undergoes hypusination, a unique post-translational modification that consists in the addition of a butylamino group from spermidine to lysine side chain, leading to the formation of the unusual amino acid hypusine. eIF-5As are the only known proteins to undergo this modification, which is essential for their function. Hypusination is mediated by the consecutive action of deoxyhypusine synthase DHSc and deoxyhypusine hydroxylase DOHH.

The protein resides in the cytoplasm. Its function is as follows. Translation factor that promotes translation elongation and termination, particularly upon ribosome stalling at specific amino acid sequence contexts. Binds between the exit (E) and peptidyl (P) site of the ribosome and promotes rescue of stalled ribosome: specifically required for efficient translation of polyproline-containing peptides as well as other motifs that stall the ribosome. Acts as a ribosome quality control (RQC) cofactor by joining the RQC complex to facilitate peptidyl transfer during CAT tailing step. Required for cell growth during both bloodstream (BF) and insect procyclic (PF) life cycle stages and for survival of the bloodstream form. This chain is Eukaryotic translation initiation factor 5A, found in Trypanosoma brucei brucei (strain 927/4 GUTat10.1).